The following is a 70-amino-acid chain: Protein SlyX homolog (70 aa).

It belongs to the SlyX family.

This Shewanella frigidimarina (strain NCIMB 400) protein is Protein SlyX homolog.